The following is a 316-amino-acid chain: tRNA dimethylallyltransferase (316 aa).

ATP is bound at residue 17-24; sequence GPTASGKT. Substrate is bound at residue 19-24; it reads TASGKT. Interaction with substrate tRNA stretches follow at residues 42 to 45, 166 to 170, 247 to 252, and 280 to 287; these read DSAL, QRLSR, RCVGYR, and KRQITWLR.

The protein belongs to the IPP transferase family. As to quaternary structure, monomer. The cofactor is Mg(2+).

The catalysed reaction is adenosine(37) in tRNA + dimethylallyl diphosphate = N(6)-dimethylallyladenosine(37) in tRNA + diphosphate. Catalyzes the transfer of a dimethylallyl group onto the adenine at position 37 in tRNAs that read codons beginning with uridine, leading to the formation of N6-(dimethylallyl)adenosine (i(6)A). This is tRNA dimethylallyltransferase from Escherichia coli O157:H7.